The following is a 968-amino-acid chain: Leucine--tRNA ligase (968 aa).

Polar residues predominate over residues 1-13 (MTETPTGTQSSRE). The tract at residues 1-22 (MTETPTGTQSSRETAADDTPRH) is disordered. The 'HIGH' region signature appears at 75–86 (PYPSGEGLHVGH). The short motif at 741-745 (KIGKS) is the 'KMSKS' region element. Position 744 (Lys-744) interacts with ATP.

It belongs to the class-I aminoacyl-tRNA synthetase family.

The protein resides in the cytoplasm. It catalyses the reaction tRNA(Leu) + L-leucine + ATP = L-leucyl-tRNA(Leu) + AMP + diphosphate. This chain is Leucine--tRNA ligase, found in Mycolicibacterium vanbaalenii (strain DSM 7251 / JCM 13017 / BCRC 16820 / KCTC 9966 / NRRL B-24157 / PYR-1) (Mycobacterium vanbaalenii).